The chain runs to 536 residues: CTP synthase (536 aa).

The segment at 1-267 (MSKFVFVTGG…CKETLRCLDL (267 aa)) is amidoligase domain. Position 13 (serine 13) interacts with CTP. Serine 13 lines the UTP pocket. ATP is bound by residues 14–19 (SIGKGI) and aspartate 71. Residues aspartate 71 and glutamate 141 each coordinate Mg(2+). CTP is bound by residues 148-150 (DIE), 188-193 (KTKPTQ), and lysine 224. UTP is bound by residues 188–193 (KTKPTQ) and lysine 224. One can recognise a Glutamine amidotransferase type-1 domain in the interval 292 to 534 (KVALVGKYIE…IKASREKLEQ (243 aa)). Glycine 354 is an L-glutamine binding site. The active-site Nucleophile; for glutamine hydrolysis is the cysteine 381. Residues 382 to 385 (LGMQ), glutamate 405, and arginine 462 each bind L-glutamine. Catalysis depends on residues histidine 507 and glutamate 509.

The protein belongs to the CTP synthase family. Homotetramer.

The enzyme catalyses UTP + L-glutamine + ATP + H2O = CTP + L-glutamate + ADP + phosphate + 2 H(+). The catalysed reaction is L-glutamine + H2O = L-glutamate + NH4(+). It carries out the reaction UTP + NH4(+) + ATP = CTP + ADP + phosphate + 2 H(+). It functions in the pathway pyrimidine metabolism; CTP biosynthesis via de novo pathway; CTP from UDP: step 2/2. Allosterically activated by GTP, when glutamine is the substrate; GTP has no effect on the reaction when ammonia is the substrate. The allosteric effector GTP functions by stabilizing the protein conformation that binds the tetrahedral intermediate(s) formed during glutamine hydrolysis. Inhibited by the product CTP, via allosteric rather than competitive inhibition. Catalyzes the ATP-dependent amination of UTP to CTP with either L-glutamine or ammonia as the source of nitrogen. Regulates intracellular CTP levels through interactions with the four ribonucleotide triphosphates. This is CTP synthase from Prochlorococcus marinus (strain MIT 9515).